The chain runs to 268 residues: Centromere protein Q (268 aa).

Positions 1-80 are disordered; it reads MSGKANASKK…KTWQPLSKST (80 aa). S31 and S50 each carry phosphoserine. Basic residues predominate over residues 58–72; the sequence is TNLKHGKTAASKRKT. A coiled-coil region spans residues 170-206; that stretch reads ELMTGNIQSLKNKIQILASEVEEEEERVKQMHQINSS. Position 249 is a phosphoserine (S249).

The protein belongs to the CENP-Q/OKP1 family. As to quaternary structure, component of the CENPA-CAD complex, composed of CENPI, CENPK, CENPL, CENPO, CENPP, CENPQ, CENPR and CENPS. The CENPA-CAD complex interacts with the CENPA-NAC complex, at least composed of CENPA, CENPC, CENPH, CENPM, CENPN, CENPT and CENPU. Post-translationally, phosphorylation at Ser-50 is essential for CENPE recruitment to kinetochores and orderly chromosome congression.

It is found in the nucleus. The protein localises to the chromosome. The protein resides in the centromere. In terms of biological role, component of the CENPA-CAD (nucleosome distal) complex, a complex recruited to centromeres which is involved in assembly of kinetochore proteins, mitotic progression and chromosome segregation. May be involved in incorporation of newly synthesized CENPA into centromeres via its interaction with the CENPA-NAC complex. Plays an important role in chromosome congression and in the recruitment of CENP-O complex (which comprises CENPO, CENPP, CENPQ and CENPU), CENPE and PLK1 to the kinetochores. This chain is Centromere protein Q (CENPQ), found in Homo sapiens (Human).